A 102-amino-acid polypeptide reads, in one-letter code: Nucleoid-associated protein BCc_301 (102 aa).

It belongs to the YbaB/EbfC family. Homodimer.

Its subcellular location is the cytoplasm. It localises to the nucleoid. Binds to DNA and alters its conformation. May be involved in regulation of gene expression, nucleoid organization and DNA protection. This Buchnera aphidicola subsp. Cinara cedri (strain Cc) protein is Nucleoid-associated protein BCc_301.